We begin with the raw amino-acid sequence, 418 residues long: Glutamyl-tRNA reductase (418 aa).

Substrate-binding positions include 49–52, Ser-106, 111–113, and Gln-117; these read TCNR and EPQ. Residue Cys-50 is the Nucleophile of the active site. Residue 186 to 191 coordinates NADP(+); it reads GAGEMI.

It belongs to the glutamyl-tRNA reductase family. As to quaternary structure, homodimer.

It carries out the reaction (S)-4-amino-5-oxopentanoate + tRNA(Glu) + NADP(+) = L-glutamyl-tRNA(Glu) + NADPH + H(+). It functions in the pathway porphyrin-containing compound metabolism; protoporphyrin-IX biosynthesis; 5-aminolevulinate from L-glutamyl-tRNA(Glu): step 1/2. In terms of biological role, catalyzes the NADPH-dependent reduction of glutamyl-tRNA(Glu) to glutamate 1-semialdehyde (GSA). In Alcanivorax borkumensis (strain ATCC 700651 / DSM 11573 / NCIMB 13689 / SK2), this protein is Glutamyl-tRNA reductase.